The primary structure comprises 372 residues: Peroxisomal biogenesis factor 3 (372 aa).

The Cytoplasmic segment spans residues 1–15 (MLRSMWNFLKRHKKK). The interval 1 to 45 (MLRSMWNFLKRHKKKCIFLGTVLGGVYILGKYGQKKIREIQEREA) is targeting to peroxisomes. The chain crosses the membrane as a helical span at residues 16–36 (CIFLGTVLGGVYILGKYGQKK). Over 37 to 116 (IREIQEREAA…LKIISFTRSI (80 aa)) the chain is Peroxisomal. The chain crosses the membrane as a helical span at residues 117–140 (VAVYSTCMLVVLLRVQLNIIGGYI). Positions 120–136 (YSTCMLVVLLRVQLNII) are interaction with PEX19. Residues 141 to 372 (YLDNATVGKN…AFSTPQQLEK (232 aa)) lie on the Cytoplasmic side of the membrane.

It belongs to the peroxin-3 family. As to quaternary structure, interacts with PEX19. In terms of tissue distribution, identified in all tissues analyzed, with the strongest expression in liver and in testis.

The protein localises to the peroxisome membrane. Functionally, involved in peroxisome biosynthesis and integrity. Assembles membrane vesicles before the matrix proteins are translocated. As a docking factor for PEX19, is necessary for the import of peroxisomal membrane proteins in the peroxisomes. In Mus musculus (Mouse), this protein is Peroxisomal biogenesis factor 3 (Pex3).